The sequence spans 130 residues: Small ribosomal subunit protein uS9 (130 aa).

A disordered region spans residues 109–130 (RKKERKKYGQRAARARYQYSKR).

It belongs to the universal ribosomal protein uS9 family.

This is Small ribosomal subunit protein uS9 from Nitratidesulfovibrio vulgaris (strain DSM 19637 / Miyazaki F) (Desulfovibrio vulgaris).